We begin with the raw amino-acid sequence, 1591 residues long: GATOR1 complex protein DEPDC5 (1591 aa).

Disordered regions lie at residues 427 to 455 (GKKSASEKTKNGRDTSLGTPKESENTLPI), 478 to 532 (LATC…STNI), and 695 to 720 (LSNSSTGVNPRTQNKDSLEDSVSTSP). Residues 430 to 439 (SASEKTKNGR) show a composition bias toward basic and acidic residues. Low complexity predominate over residues 494–508 (SASSCDVSSSPSLPS). Serine 505 is modified (phosphoserine). Polar residues predominate over residues 518–532 (SQASDDSSLGKSTNI). Position 992 is a phosphoserine (serine 992). Disordered regions lie at residues 1040–1064 (SQKSLGEQQTTVHGKSSTQPAENSS) and 1118–1153 (STGQPMDRGNNQTFGNSQNIEQAFPSANSGDYSSQQ). Polar residues predominate over residues 1118–1149 (STGQPMDRGNNQTFGNSQNIEQAFPSANSGDY). Residues 1175 to 1250 (PSTGVQLLSE…YGFYFYKIVM (76 aa)) form the DEP domain. Phosphoserine is present on serine 1518.

It belongs to the IML1 family. As to quaternary structure, within the GATOR complex, component of the GATOR1 subcomplex, made of DEPDC5, NPRL2 and NPRL3. GATOR1 mediates the strong interaction of the GATOR complex with small GTPases Rag (RagA/RRAGA, RagB/RRAGB, RagC/RRAGC and/or RagD/RRAGD) heterodimers. GATOR1 interacts with GPR155/LYCHOS; interaction takes place in presence of cholesterol and prevents interaction between GATOR1 and KICSTOR. Interacts with SAMTOR; interaction is direct and takes place in presence of methionine, leading to inhibit the activity of the GATOR1 complex. Phosphorylation at Ser-992 and Ser-1518 by AKT1 and PIM1 inhibit the activity of DEPDC5, releasing inhibition of the mTORC1 pathway. Post-translationally, ubiquitinated. Amino acid-induced 'Lys-48'-linked polyubiquitination of DEPDC5 by the BCR(KLHL22) ubiquitin ligase complex leads to DEPDC5 proteasomal degradation and inhibition of the GATOR1 complex. Ubiquitination may occur at multiple lysines. In terms of tissue distribution, expressed at low levels in all brain regions. Expressed throughout brain development, including in midgestation embryonic head (11.5 dpc), neonatal brain and whole adult brain. Present in neurons and absent in non-neuronal cells, including astrocytes (at protein level).

It is found in the lysosome membrane. Its subcellular location is the cytoplasm. It localises to the cytosol. The protein resides in the perinuclear region. In terms of biological role, as a component of the GATOR1 complex functions as an inhibitor of the amino acid-sensing branch of the mTORC1 pathway. In response to amino acid depletion, the GATOR1 complex has GTPase activating protein (GAP) activity and strongly increases GTP hydrolysis by RagA/RRAGA (or RagB/RRAGB) within heterodimeric Rag complexes, thereby turning them into their inactive GDP-bound form, releasing mTORC1 from lysosomal surface and inhibiting mTORC1 signaling. In the presence of abundant amino acids, the GATOR1 complex is negatively regulated by GATOR2, the other GATOR subcomplex, in this amino acid-sensing branch of the TORC1 pathway. Within the GATOR1 complex, DEPDC5 mediates direct interaction with the nucleotide-binding pocket of small GTPases Rag (RagA/RRAGA, RagB/RRAGB, RagC/RRAGC and/or RagD/RRAGD) and coordinates their nucleotide loading states by promoting RagA/RRAGA or RagB/RRAGB into their GDP-binding state and RagC/RRAGC or RagD/RRAGD into their GTP-binding state. However, it does not execute the GAP activity, which is mediated by NPRL2. The polypeptide is GATOR1 complex protein DEPDC5 (Mus musculus (Mouse)).